Here is an 88-residue protein sequence, read N- to C-terminus: MAHKKGASSSRNGRDSAAQRLGVKRFGGQVVKAGEILVRQRGTKFHPGVNVGRGGDDTLFAKAAGAVQFGIKRGRKTINIVEPATQDA.

Residues M1–L21 are disordered.

This sequence belongs to the bacterial ribosomal protein bL27 family.

The sequence is that of Large ribosomal subunit protein bL27 from Mycobacterium marinum (strain ATCC BAA-535 / M).